A 731-amino-acid chain; its full sequence is Elongation factor 2 (731 aa).

The tr-type G domain occupies 19–260 (KHIRNIGIVA…MVVHHLPNPL (242 aa)). GTP contacts are provided by residues 28–35 (AHIDHGKT), 94–98 (DTPGH), and 148–151 (NKVD). Histidine 597 is modified (diphthamide).

This sequence belongs to the TRAFAC class translation factor GTPase superfamily. Classic translation factor GTPase family. EF-G/EF-2 subfamily.

The protein resides in the cytoplasm. In terms of biological role, catalyzes the GTP-dependent ribosomal translocation step during translation elongation. During this step, the ribosome changes from the pre-translocational (PRE) to the post-translocational (POST) state as the newly formed A-site-bound peptidyl-tRNA and P-site-bound deacylated tRNA move to the P and E sites, respectively. Catalyzes the coordinated movement of the two tRNA molecules, the mRNA and conformational changes in the ribosome. This is Elongation factor 2 from Methanoregula boonei (strain DSM 21154 / JCM 14090 / 6A8).